The following is a 597-amino-acid chain: Glypican-3 (597 aa).

The signal sequence occupies residues 1–24 (MAGTVRTACLLVAMLLGLGCLGQA). Position 25 is a pyrrolidone carboxylic acid (glutamine 25). Cystine bridges form between cysteine 34–cysteine 71, cysteine 64–cysteine 261, cysteine 72–cysteine 264, cysteine 196–cysteine 348, cysteine 251–cysteine 284, cysteine 273–cysteine 421, and cysteine 277–cysteine 409. 2 N-linked (GlcNAc...) asparagine glycosylation sites follow: asparagine 123 and asparagine 240. Serine 351 is subject to Phosphoserine. N-linked (GlcNAc...) asparagine glycosylation is present at asparagine 417. Residues serine 494 and serine 508 are each glycosylated (O-linked (Xyl...) (glycosaminoglycan) serine). A disordered region spans residues 533 to 553 (DAPGNKQHGNQKDNEITTSHS).

Belongs to the glypican family. Heterodimer; disulfide-linked. Cleavage by a furin-like convertase results in production of alpha and beta chains which form a disulfide-linked heterodimer. Interacts with DPP4. Interacts with FGF2. Interacts with WNT5A. Also interacts with WNT3A and WNT7B. Interacts with hedgehog protein SHH; the heparan sulfate chains are not required for the interaction. Also interacts with hedgehog protein IHH. Interacts with CD81. Interacts with Wnt receptors FZD4, FZD7 and FZD8; the heparan sulfate chains are required for the interaction. O-glycosylated; contains heparan sulfate and/or chondroitin sulfate. Post-translationally, cleaved intracellularly by a furin-like convertase to generate 2 subunits, alpha and beta, which remain associated through disulfide bonds and are associated with the cell surface via the GPI-anchor. This processing is essential for its role in inhibition of hedgehog signaling. A second proteolytic event may result in cleavage of the protein on the cell surface, separating it from the GPI-anchor and leading to its shedding from the cell surface.

The protein localises to the cell membrane. Cell surface proteoglycan. Negatively regulates the hedgehog signaling pathway when attached via the GPI-anchor to the cell surface by competing with the hedgehog receptor PTC1 for binding to hedgehog proteins. Binding to the hedgehog protein SHH triggers internalization of the complex by endocytosis and its subsequent lysosomal degradation. Positively regulates the canonical Wnt signaling pathway by binding to the Wnt receptor Frizzled and stimulating the binding of the Frizzled receptor to Wnt ligands. Positively regulates the non-canonical Wnt signaling pathway. Binds to CD81 which decreases the availability of free CD81 for binding to the transcriptional repressor HHEX, resulting in nuclear translocation of HHEX and transcriptional repression. Inhibits the dipeptidyl peptidase activity of DPP4. Plays a role in limb patterning and skeletal development by controlling the cellular response to BMP4. Modulates the effects of growth factors BMP2, BMP7 and FGF7 on renal branching morphogenesis. Required for coronary vascular development. Plays a role in regulating cell movements during gastrulation. This Rattus norvegicus (Rat) protein is Glypican-3 (Gpc3).